Reading from the N-terminus, the 244-residue chain is MKQKRLLRRDGFTFKQFFVGHDRCAMKVGTDGVLLGAWTPVSDKKAILDIGCGSGLIALMLAQRTDENTKIDAVELDTEAALQAQDNAEQSPWQRKIDVYQQDIGDFAEQYSQCYDLIVSNPPYFEPAVACRNEAREQARYTGSMTHQQLLQYAETLITADGLFCVVLPYAIGEEFETMACHQGWFSHHRVNIRDRQGKPLHRMLLAFSRKEKTGLISELTIRQPDGAYTQEFQQLVTDFYLYY.

Belongs to the methyltransferase superfamily. tRNA (adenine-N(6)-)-methyltransferase family.

Its subcellular location is the cytoplasm. The enzyme catalyses adenosine(37) in tRNA1(Val) + S-adenosyl-L-methionine = N(6)-methyladenosine(37) in tRNA1(Val) + S-adenosyl-L-homocysteine + H(+). Its function is as follows. Specifically methylates the adenine in position 37 of tRNA(1)(Val) (anticodon cmo5UAC). The chain is tRNA1(Val) (adenine(37)-N6)-methyltransferase from Photorhabdus laumondii subsp. laumondii (strain DSM 15139 / CIP 105565 / TT01) (Photorhabdus luminescens subsp. laumondii).